Consider the following 363-residue polypeptide: Probable L-tyrosine/L-aspartate decarboxylase (363 aa).

K224 carries the post-translational modification N6-(pyridoxal phosphate)lysine.

Belongs to the group II decarboxylase family. MfnA subfamily. Pyridoxal 5'-phosphate is required as a cofactor.

It carries out the reaction L-tyrosine + H(+) = tyramine + CO2. It catalyses the reaction L-aspartate + H(+) = beta-alanine + CO2. Its pathway is cofactor biosynthesis; methanofuran biosynthesis. It participates in cofactor biosynthesis; coenzyme A biosynthesis. Its function is as follows. Catalyzes the decarboxylation of L-tyrosine to produce tyramine for methanofuran biosynthesis. Can also catalyze the decarboxylation of L-aspartate to produce beta-alanine for coenzyme A (CoA) biosynthesis. The sequence is that of Probable L-tyrosine/L-aspartate decarboxylase from Methanosphaerula palustris (strain ATCC BAA-1556 / DSM 19958 / E1-9c).